The chain runs to 308 residues: MALIEGVGDEVTVLFALVLFFMVLMLAWVSTHTTERAPTHWIRPEPAQGGASSNSQRDFHPGPSQTLTNADPNSETVDSSDSTQSSREFQNAGATPHSEVAFSSSGSTVSTGGSVEYTGAAADSPPDGESHPNFTVSSRDPQAGASSSLRYRGLGDGTTAQSAEEAGTIHLRLKFLNDTERLVTVRLSDTIMYIKRTYFPGQELRVRLIFQGQLLRDDSQTVSSLQLRDGSVLHCHISQHASVPGVGADQANVPLNVGNLLVPLLFLIVMLLWYCQFQYPSLFTGTATACLGGFTLLISAIAFSSYHR.

A helical membrane pass occupies residues 11 to 31; it reads VTVLFALVLFFMVLMLAWVST. Residues 39–162 are disordered; sequence THWIRPEPAQ…GLGDGTTAQS (124 aa). Polar residues predominate over residues 63–93; it reads PSQTLTNADPNSETVDSSDSTQSSREFQNAG. The segment covering 103–115 has biased composition (low complexity); it reads SSSGSTVSTGGSV. Residues 132–149 are compositionally biased toward polar residues; that stretch reads PNFTVSSRDPQAGASSSL. The 74-residue stretch at 169 to 242 folds into the Ubiquitin-like domain; the sequence is IHLRLKFLND…LHCHISQHAS (74 aa). 2 helical membrane passes run 253–273 and 283–303; these read VPLN…MLLW and FTGT…AIAF.

It is found in the membrane. Its subcellular location is the cytoplasm. The protein localises to the nucleus. Its function is as follows. May contribute to the regulation of translation during cell-cycle progression. May contribute to the regulation of cell proliferation. The membrane form is involved in sterol-regulated ubiquitination and degradation of HMG-CoA reductase HMGCR. May be involved in centrosome assembly. This chain is Transmembrane and ubiquitin-like domain-containing protein 1 (tmub1), found in Xenopus laevis (African clawed frog).